Reading from the N-terminus, the 1349-residue chain is Adhesion G protein-coupled receptor F5 (1349 aa).

The N-terminal stretch at 1 to 24 (MKSSRTVTLYFVLIVICSSEATWS) is a signal peptide. The Extracellular portion of the chain corresponds to 25 to 1016 (RPAEPIVHPL…PGSLLKILLD (992 aa)). N-linked (GlcNAc...) asparagine glycosylation is found at Asn-73, Asn-94, Asn-185, Asn-254, Asn-270, Asn-286, Asn-299, Asn-326, Asn-337, Asn-349, Asn-396, Asn-470, Asn-503, Asn-538, Asn-649, and Asn-666. Residues 163-271 (PETYITLKIK…NSFQGTPSNE (109 aa)) enclose the SEA domain. Ig-like domains are found at residues 268–366 (PSNE…LDVT), 367–464 (PIRI…IAVT), and 469–559 (ANLT…KDVT). An intrachain disulfide couples Cys-291 to Cys-348. A disulfide bridge connects residues Cys-389 and Cys-447. The cysteines at positions 490 and 543 are disulfide-linked. A Phosphoserine modification is found at Ser-819. Residues Asn-820, Asn-958, and Asn-963 are each glycosylated (N-linked (GlcNAc...) asparagine). Residues 842-1006 (TPPFLFHPNV…SILMSPDSPD (165 aa)) form the GAIN-B domain. 2 disulfides stabilise this stretch: Cys-954-Cys-988 and Cys-973-Cys-990. Residues 954 to 1006 (CVFWNFSLANNTGGWDSSGCTVEDDGRDNRDRVFCKCNHLTSFSILMSPDSPD) are GPS. Residues 994–1009 (TSFSILMSPDSPDPGS) are tethered agonist. The chain crosses the membrane as a helical span at residues 1017 to 1036 (IISYIGLGFSIVSLAACLVV). The Cytoplasmic portion of the chain corresponds to 1037-1055 (EAMVWKSVTKNRTSYMRHI). The chain crosses the membrane as a helical span at residues 1056–1078 (CIVNIALCLLIADIWFIVAGAIH). Over 1079–1097 (DGHYPLNETACVAATFFIH) the chain is Extracellular. Asn-1085 is a glycosylation site (N-linked (GlcNAc...) asparagine). Residues 1098–1120 (FFYLSVFFWMLTLGLMLFYRLIF) form a helical membrane-spanning segment. At 1121 to 1131 (ILHDASKSTQK) the chain is on the cytoplasmic side. The chain crosses the membrane as a helical span at residues 1132–1154 (AIAFSLGYGCPLIISSITVGVTQ). Topologically, residues 1155–1173 (PQEVYMRKNACWLNWEDTR) are extracellular. Residues 1174–1196 (ALLAFAIPALIIVVVNVSITVVV) form a helical membrane-spanning segment. Residues 1197–1216 (ITKILRPSVGDKPGKQEKSS) lie on the Cytoplasmic side of the membrane. Residues 1217 to 1239 (LFQISKSIGVLTPLLGLTWGFGL) traverse the membrane as a helical segment. Residues 1240-1248 (ATVIQGSNA) lie on the Extracellular side of the membrane. Residues 1249–1271 (VFHIIFTLLNAFQGLFILLFGCL) form a helical membrane-spanning segment. At 1272–1349 (WDQKVQEALL…NSSSAYSLLN (78 aa)) the chain is on the cytoplasmic side. Residue Thr-1303 is modified to Phosphothreonine. Residue Ser-1310 is modified to Phosphoserine. Low complexity predominate over residues 1329–1343 (STPETTSSSVENSSS). Positions 1329–1349 (STPETTSSSVENSSSAYSLLN) are disordered.

The protein belongs to the G-protein coupled receptor 2 family. Adhesion G-protein coupled receptor (ADGR) subfamily. In terms of assembly, homodimer; disulfide-linked. Heterodimer of 2 chains generated by proteolytic processing; the large extracellular N-terminal fragment and the membrane-bound C-terminal fragment predominantly remain associated and non-covalently linked. Fragment generates by the processing enzyme furin remains attached to the extracellular N-terminal fragment. Interacts (via N-terminal extracellular domain) with SFTPD. In terms of processing, highly glycosylated. Post-translationally, proteolytically cleaved at multiple sites: one in the GPS region of the GAIN-B domain (S1 site) and the other in the SEA domain (S2 site). The proteolytic cleavage at S1 site generates an extracellular subunit and a seven-transmembrane subunit. The proteolytic cleavage at S2 site generates a fragment that undergoes proteolytic cleavage by the processing enzyme furin. As to expression, highly expressed in the lung and to a much lesser extent in the kidney and heart. Dense localization in alveolar walls of the lung and in the intercalated cells of the collecting duct of the kidney.

It is found in the cell membrane. With respect to regulation, as an adhesion G protein-coupled receptor (aGPCR) exhibits a large N-terminal extracellular domain containing highly conserved GPCR autoproteolysis-inducing (GAIN) domain. During synthesis, intracellular autoproteolytic processing of nascent chain within the GAIN domain generates a mature protein, consisting of an N-terminal fragment that is non-covalently linked to the C-terminal fragment. The mature protein is routed to the plasma membrane where the N- and C-terminal fragments remain associated, forming the holoreceptor. Dissociation of the aGPCR fragments stimulates G protein signaling through the action of the tethered-peptide agonist stalk that is occluded within the GAIN domain in the holoreceptor form. This dissociation might be induced by ligand binding, such as that of sFNDC4. Functionally, receptor that plays a critical role in lung surfactant homeostasis. May play a role in controlling adipocyte function. In terms of biological role, adhesion G protein-coupled receptor. In alveolar type II (ATII or AT2) cells, required for normal lung surfactant homeostasis. Modulation of both surfactant secretion and uptake by ATII cells is mediated by the downstream activation of GNAQ/GNA11 proteins and may be a consequence of increased cortical F-actin assembly induced by ADGRF5 activation. In the kidney, may play a role in the regulation of acid excretion into the primary urine, possibly by regulating the surface expression of V-ATPase proton pump. As a receptor for soluble FNDC4 (sFNDC4), required for proper systemic glucose tolerance, specifically sensitizing white adipose tissue to insulin. Also plays a role in sFNDC4-induced decrease of local inflammation in white adipose tissue. This Rattus norvegicus (Rat) protein is Adhesion G protein-coupled receptor F5 (Adgrf5).